We begin with the raw amino-acid sequence, 71 residues long: Small ribosomal subunit protein eS17 (71 aa).

It belongs to the eukaryotic ribosomal protein eS17 family.

This chain is Small ribosomal subunit protein eS17, found in Pyrobaculum islandicum (strain DSM 4184 / JCM 9189 / GEO3).